We begin with the raw amino-acid sequence, 329 residues long: Ribonucleoside-diphosphate reductase subunit beta (329 aa).

The Fe cation site is built by aspartate 66, glutamate 97, and histidine 101. The active site involves tyrosine 105. Positions 164, 198, and 201 each coordinate Fe cation.

It belongs to the ribonucleoside diphosphate reductase small chain family. Tetramer of two alpha and two beta subunits. Requires Fe cation as cofactor.

The catalysed reaction is a 2'-deoxyribonucleoside 5'-diphosphate + [thioredoxin]-disulfide + H2O = a ribonucleoside 5'-diphosphate + [thioredoxin]-dithiol. In terms of biological role, provides the precursors necessary for DNA synthesis. Catalyzes the biosynthesis of deoxyribonucleotides from the corresponding ribonucleotides. In Bacillus subtilis (strain 168), this protein is Ribonucleoside-diphosphate reductase subunit beta (nrdF).